Reading from the N-terminus, the 239-residue chain is tRNA (guanine-N(1)-)-methyltransferase (239 aa).

Residues G108 and 127-132 (LGDYVL) each bind S-adenosyl-L-methionine.

Belongs to the RNA methyltransferase TrmD family. Homodimer.

It localises to the cytoplasm. It carries out the reaction guanosine(37) in tRNA + S-adenosyl-L-methionine = N(1)-methylguanosine(37) in tRNA + S-adenosyl-L-homocysteine + H(+). Specifically methylates guanosine-37 in various tRNAs. The chain is tRNA (guanine-N(1)-)-methyltransferase from Streptococcus pneumoniae serotype 2 (strain D39 / NCTC 7466).